A 334-amino-acid chain; its full sequence is Serine/Arginine-related protein 53 (334 aa).

Residues 1 to 13 (MGRRSSDTEEESR) show a composition bias toward basic and acidic residues. Disordered regions lie at residues 1 to 173 (MGRR…IKAG), 201 to 222 (LKAKERNEEEAKRRKEEDQATL), and 241 to 290 (VQQT…SIPT). Residues 14 to 24 (SKRKKKHRRRS) show a composition bias toward basic residues. Over residues 44–62 (PRSESRSWSRDRQPRSHSY) the composition is skewed to basic and acidic residues. Positions 78–118 (SRRKRSRSRSRGRGKSYRVQRSRSKSRTRRSRSRPRPRSHS) are enriched in basic residues. 3 stretches are compositionally biased toward basic and acidic residues: residues 132–166 (RSRDRDRRKVRDKEKREKEKDKGKDKEAHTIKRGD), 201–218 (LKAKERNEEEAKRRKEED), and 247–262 (SSKDVKKSVEPSEVKH). A coiled-coil region spans residues 180-234 (AEQAKARLQLVLEAAAKADEALKAKERNEEEAKRRKEEDQATLGEQVKRVKEIEA).

Interacts (via Arg/Ser-rich domain) with LUC7L3, RBM39 and RSF1. Phosphorylated.

It is found in the nucleus speckle. The protein resides in the nucleus. Its subcellular location is the cytoplasm. Functionally, plays a role in pre-mRNA splicing. Involved in both constitutive and alternative pre-mRNA splicing. May have a role in the recognition of the 3' splice site during the second step of splicing. This is Serine/Arginine-related protein 53 (Rsrc1) from Rattus norvegicus (Rat).